We begin with the raw amino-acid sequence, 488 residues long: (S)-canadine synthase CYP719A21 (488 aa).

The helical transmembrane segment at 6–26 threads the bilayer; the sequence is LWILTLISTILAVFAAVLIIF. Cys-432 serves as a coordination point for heme.

Belongs to the cytochrome P450 family. Requires heme as cofactor.

The protein resides in the membrane. It catalyses the reaction (S)-tetrahydrocolumbamine + reduced [NADPH--hemoprotein reductase] + O2 = (S)-canadine + oxidized [NADPH--hemoprotein reductase] + 2 H2O + H(+). The protein operates within alkaloid biosynthesis. Its function is as follows. Cytochrome P450 involved in the biosynthesis of the benzylisoquinoline alkaloid noscapine. Converts (S)-tetrahydrocolumbamine to (S)-canadine. The protein is (S)-canadine synthase CYP719A21 of Papaver somniferum (Opium poppy).